Here is a 424-residue protein sequence, read N- to C-terminus: Enolase (424 aa).

Residue glutamine 162 coordinates (2R)-2-phosphoglycerate. The Proton donor role is filled by glutamate 204. Aspartate 241, glutamate 284, and aspartate 311 together coordinate Mg(2+). Positions 336, 365, 366, and 387 each coordinate (2R)-2-phosphoglycerate. The active-site Proton acceptor is the lysine 336.

It belongs to the enolase family. Mg(2+) serves as cofactor.

It localises to the cytoplasm. The protein resides in the secreted. It is found in the cell surface. It carries out the reaction (2R)-2-phosphoglycerate = phosphoenolpyruvate + H2O. Its pathway is carbohydrate degradation; glycolysis; pyruvate from D-glyceraldehyde 3-phosphate: step 4/5. Functionally, catalyzes the reversible conversion of 2-phosphoglycerate (2-PG) into phosphoenolpyruvate (PEP). It is essential for the degradation of carbohydrates via glycolysis. In Maricaulis maris (strain MCS10) (Caulobacter maris), this protein is Enolase.